We begin with the raw amino-acid sequence, 177 residues long: Non-specific lipid transfer protein GPI-anchored 22 (177 aa).

The first 29 residues, 1–29 (MARFMAYNQNPQMLALCITVAVMFLGVRS), serve as a signal peptide directing secretion. 4 cysteine pairs are disulfide-bonded: cysteine 38–cysteine 81, cysteine 48–cysteine 63, cysteine 64–cysteine 108, and cysteine 79–cysteine 117. N-linked (GlcNAc...) asparagine glycosylation occurs at asparagine 113. The GPI-anchor amidated serine moiety is linked to residue serine 152. A propeptide spans 153-177 (SSIKGRDNKQFGLMMAGALSIWYIM) (removed in mature form).

It belongs to the plant LTP family. In terms of tissue distribution, expressed in seedlings, preferentially in hypocotyls and roots. Also observed in siliques.

The protein localises to the cell membrane. Probable lipid transfer protein. In Arabidopsis thaliana (Mouse-ear cress), this protein is Non-specific lipid transfer protein GPI-anchored 22.